A 378-amino-acid chain; its full sequence is Sphingosine 1-phosphate receptor 3 (378 aa).

The Extracellular portion of the chain corresponds to 1-40 (MATALPPRLQPVRGNETLREHYQYVGKLAGRLKEASEGST). Residue Asn-15 is glycosylated (N-linked (GlcNAc...) asparagine). A helical membrane pass occupies residues 41-65 (LTTVLFLVICSFIVLENLMVLIAIW). At 66–72 (KNNKFHN) the chain is on the cytoplasmic side. The chain crosses the membrane as a helical span at residues 73–101 (RMYFFIGNLALCDLLAGIAYKVNILMSGK). The Extracellular portion of the chain corresponds to 102-115 (KTFSLSPTVWFLRE). A helical transmembrane segment spans residues 116-134 (GSMFVALGASTCSLLAIAI). Residues 135-153 (ERHLTMIKMRPYDANKRHR) lie on the Cytoplasmic side of the membrane. The helical transmembrane segment at 154 to 179 (VFLLIGMCWLIAFTLGALPILGWNCL) threads the bilayer. Over 180–195 (HNLPDCSTILPLYSKK) the chain is Extracellular. The chain crosses the membrane as a helical span at residues 196 to 216 (YIAFCISIFTAILVTIVILYA). Over 217–243 (RIYFLVKSSSRKVANHNNSERSMALLR) the chain is Cytoplasmic. Residues 244–265 (TVVIVVSVFIACWSPLFILFLI) form a helical membrane-spanning segment. At 266 to 281 (DVACRVQACPILFKAQ) the chain is on the extracellular side. A helical membrane pass occupies residues 282 to 302 (WFIVLAVLNSAMNPVIYTLAS). The Cytoplasmic portion of the chain corresponds to 303–378 (KEMRRAFFRL…AALQNGIFCN (76 aa)). Residue Ser-326 is modified to Phosphoserine. The interval 327–357 (PIQPALDPSRSKSSSSNNSSHSPKVKEDLPH) is disordered. Residues 337–348 (SKSSSSNNSSHS) are compositionally biased toward low complexity.

This sequence belongs to the G-protein coupled receptor 1 family. In terms of tissue distribution, expressed in all tissues, but most abundantly in heart, placenta, kidney, and liver.

The protein resides in the cell membrane. Functionally, receptor for the lysosphingolipid sphingosine 1-phosphate (S1P). S1P is a bioactive lysophospholipid that elicits diverse physiological effect on most types of cells and tissues. When expressed in rat HTC4 hepatoma cells, is capable of mediating S1P-induced cell proliferation and suppression of apoptosis. This Homo sapiens (Human) protein is Sphingosine 1-phosphate receptor 3.